We begin with the raw amino-acid sequence, 20 residues long: 23 kDa cell wall protein (20 aa).

It localises to the secreted. It is found in the cell wall. This is 23 kDa cell wall protein from Arabidopsis thaliana (Mouse-ear cress).